A 524-amino-acid polypeptide reads, in one-letter code: MKPQELAKEVAKRRTFAIISHPDAGKTTITEQLLLFGGVIREAGTVKGRKSGHFAKSDWMEIEKKRGISVTSSVMQFNYQGKRINILDTPGHEDFSEDTYRTLMAVDAAVMVIDSAKGIEAQTKKLFKVVKQRGIPIFTFMNKLDRDGREPLDLIAELEDLLGIEGYAMNWPIGMGKGLKGLYDRVNQRIELYRREGDDRFLPLNDQGQLDPSQPLTQDSIYTQTLDDIELLNDAGNQFNLKKIMAGEQTPVFFGSALTNFGVETFLNSFVQYAPEPGPKKTEQGGEVNPTNPELSAFVFKIQANMNPAHRDRIAFVRIVSGEFERGMDVILHRTGKTMRLNNSTEFMADTRETVSTAVAGDIVGLYDTGNFQIGDTIYQGKEPIQFEKLPQFTPELFVRVTPKNVMKQKSFHKGMQQLVQEGAVQLYKTYNTNDYILGAVGQLQFEVFQFRMLHEYHSEVIMTPIGSRTARWINPDQLDEKMSSSRNLLVQDIHGDPLFLFENQYAERWFADKYPDVKLTAKM.

One can recognise a tr-type G domain in the interval 11–278 (AKRRTFAIIS…SFVQYAPEPG (268 aa)). GTP-binding positions include 20 to 27 (SHPDAGKT), 88 to 92 (DTPGH), and 142 to 145 (NKLD).

Belongs to the TRAFAC class translation factor GTPase superfamily. Classic translation factor GTPase family. PrfC subfamily.

The protein localises to the cytoplasm. Increases the formation of ribosomal termination complexes and stimulates activities of RF-1 and RF-2. It binds guanine nucleotides and has strong preference for UGA stop codons. It may interact directly with the ribosome. The stimulation of RF-1 and RF-2 is significantly reduced by GTP and GDP, but not by GMP. The chain is Peptide chain release factor 3 from Lacticaseibacillus paracasei (strain ATCC 334 / BCRC 17002 / CCUG 31169 / CIP 107868 / KCTC 3260 / NRRL B-441) (Lactobacillus paracasei).